A 501-amino-acid polypeptide reads, in one-letter code: Capsid protein (501 aa).

Residues 78–98 (SEEGFPVEPKTEEKDIPSTSG) are disordered. Residues 122–125 (KRGF) carry the Nuclear localization signal motif. The CCHC-type zinc-finger motif lies at 431–448 (CKCWICHEEGHYANECPK).

This sequence belongs to the caulimoviridae capsid protein family. Interacts (via nuclear localization signal) with host importin alpha.

The protein resides in the virion. It localises to the host nucleus. Self assembles to form an icosahedral capsid, about 50 nm in diameter, nm, composed of 420 subunits of the viral capsid protein. The capsid encapsulates the genomic dsDNA. Following virus entry into host cell, provides nuclear import of the viral genome. Virus particles do not enter the nucleus, but dock at the nuclear membrane through the interaction with host importins. This Cestrum parqui (CmYLCV) protein is Capsid protein.